The following is a 396-amino-acid chain: Elongation factor Tu (396 aa).

Positions 10 to 206 (KPHVNVGTIG…ALDTYIPTPE (197 aa)) constitute a tr-type G domain. The segment at 19–26 (GHVDHGKT) is G1. GTP is bound at residue 19–26 (GHVDHGKT). T26 is a Mg(2+) binding site. The segment at 60–64 (GITIN) is G2. A G3 region spans residues 81 to 84 (DCPG). GTP-binding positions include 81 to 85 (DCPGH) and 136 to 139 (NKCD). A G4 region spans residues 136–139 (NKCD). The segment at 174–176 (SAK) is G5.

Belongs to the TRAFAC class translation factor GTPase superfamily. Classic translation factor GTPase family. EF-Tu/EF-1A subfamily. As to quaternary structure, monomer.

Its subcellular location is the cytoplasm. The catalysed reaction is GTP + H2O = GDP + phosphate + H(+). In terms of biological role, GTP hydrolase that promotes the GTP-dependent binding of aminoacyl-tRNA to the A-site of ribosomes during protein biosynthesis. This Paraburkholderia xenovorans (strain LB400) protein is Elongation factor Tu.